The following is a 66-amino-acid chain: Large ribosomal subunit protein bL35 (66 aa).

2 stretches are compositionally biased toward basic residues: residues 1–16 (MPKMKTHRGAAKRVKR) and 38–49 (TKQKRQLRKARL). The tract at residues 1-49 (MPKMKTHRGAAKRVKRTASGQLKRSRAFTSHLFANKSTKQKRQLRKARL) is disordered.

The protein belongs to the bacterial ribosomal protein bL35 family.

In Staphylococcus aureus (strain MSSA476), this protein is Large ribosomal subunit protein bL35.